The primary structure comprises 187 residues: Decorin-binding protein B (187 aa).

The first 20 residues, 1 to 20 (MKIGKLNSIVIALFFKLLVA), serve as a signal peptide directing secretion.

This sequence belongs to the decorin-binding protein family.

In terms of biological role, binds to decorin which may mediate the adherence of B.burgdorferi to collagen fibers in skin and other tissues. In Borreliella burgdorferi (strain ATCC 35210 / DSM 4680 / CIP 102532 / B31) (Borrelia burgdorferi), this protein is Decorin-binding protein B (dbpB).